We begin with the raw amino-acid sequence, 443 residues long: Putative metabolite transport protein YaaU (443 aa).

At 1-18 (MQPSRNFDDLKFSSIHRR) the chain is on the cytoplasmic side. The chain crosses the membrane as a helical span at residues 19 to 39 (ILLWGSGGPFLDGYVLVMIGV). At 40-53 (ALEQLTPALKLDAD) the chain is on the periplasmic side. Residues 54-74 (WIGLLGAGTLAGLFVGTSLFG) traverse the membrane as a helical segment. Residues 75-84 (YISDKVGRRK) are Cytoplasmic-facing. Residues 85 to 105 (MFLIDIIAIGVISVATMFVSS) form a helical membrane-spanning segment. Residues 106–113 (PVELLVMR) are Periplasmic-facing. The chain crosses the membrane as a helical span at residues 114 to 134 (VLIGIVIGADYPIATSMITEF). The Cytoplasmic segment spans residues 135 to 145 (SSTRQRAFSIS). The helical transmembrane segment at 146-166 (FIAAMWYVGATCADLVGYWLY) threads the bilayer. Residues 167–173 (DVEGGWR) are Periplasmic-facing. A helical membrane pass occupies residues 174–194 (WMLGSAAIPCLLILIGRFELP). The Cytoplasmic segment spans residues 195–241 (ESPRWLLRKGRVKECEEMMIKLFGEPVAFDEEQPQQTRFRDLFNRRH). The helical transmembrane segment at 242 to 262 (FPFVLFVAAIWTCQVIPMFAI) threads the bilayer. Residues 263 to 282 (YTFGPQIVGLLGLGVGKNAA) are Periplasmic-facing. Residues 283–303 (LGNVVISLFFMLGCIPPMLWL) form a helical membrane-spanning segment. At 304 to 309 (NTAGRR) the chain is on the cytoplasmic side. Residues 310-329 (PLLIGSFAMMTLALAVLGLI) form a helical membrane-spanning segment. Over 330-334 (PDMGI) the chain is Periplasmic. Residues 335 to 357 (WLVVMAFAVYAFFSGGPGNLQWL) traverse the membrane as a helical segment. Over 358–373 (YPNELFPTDIRASAVG) the chain is Cytoplasmic. Residues 374 to 394 (VIMSLSRIGTIVSTWALPIFI) form a helical membrane-spanning segment. Topologically, residues 395 to 401 (NNYGISN) are periplasmic. A helical transmembrane segment spans residues 402–422 (TMLMGAGISLFGLLISVAFAP). The Cytoplasmic segment spans residues 423-443 (ETRGMSLAQTSNMTIRGQRMG).

Belongs to the major facilitator superfamily. Sugar transporter (TC 2.A.1.1) family.

The protein localises to the cell inner membrane. In Escherichia coli (strain K12), this protein is Putative metabolite transport protein YaaU (yaaU).